The sequence spans 517 residues: Beta-galactoside alpha-2,6-sialyltransferase 2 (517 aa).

Residues 1 to 10 lie on the Cytoplasmic side of the membrane; sequence MKPNLKQWKQ. A helical; Signal-anchor for type II membrane protein transmembrane segment spans residues 11–31; sequence FMLFGICAWGLLFLVIFVYFT. At 32 to 517 the chain is on the lumenal side; that stretch reads DSNSVEPVPS…IHCPIKDHIT (486 aa). Asparagine 201, asparagine 298, and asparagine 328 each carry an N-linked (GlcNAc...) asparagine glycan. 3 cysteine pairs are disulfide-bonded: cysteine 244/cysteine 510, cysteine 287/cysteine 439, and cysteine 457/cysteine 468.

It belongs to the glycosyltransferase 29 family.

Its subcellular location is the golgi apparatus. The protein resides in the golgi stack membrane. It catalyses the reaction a beta-D-galactoside + CMP-N-acetyl-beta-neuraminate = an N-acetyl-alpha-neuraminyl-(2-&gt;6)-beta-D-galactosyl derivative + CMP + H(+). Transfers sialic acid from the donor of substrate CMP-sialic acid to galactose containing acceptor substrates. The protein is Beta-galactoside alpha-2,6-sialyltransferase 2 (st6gal2) of Xenopus tropicalis (Western clawed frog).